Here is a 306-residue protein sequence, read N- to C-terminus: Probable histidinol-phosphatase (306 aa).

This sequence belongs to the PHP hydrolase family. HisK subfamily.

The enzyme catalyses L-histidinol phosphate + H2O = L-histidinol + phosphate. It participates in amino-acid biosynthesis; L-histidine biosynthesis; L-histidine from 5-phospho-alpha-D-ribose 1-diphosphate: step 8/9. This is Probable histidinol-phosphatase from Schizosaccharomyces pombe (strain 972 / ATCC 24843) (Fission yeast).